The sequence spans 229 residues: Glutamine amidotransferase-like class 1 domain-containing protein 1 (229 aa).

The first 34 residues, 1–34 (MKKQGAPVSGGGTERLTKPSCLMVGSAVAEGVSA), serve as a signal peptide directing secretion. N-linked (GlcNAc...) asparagine glycosylation is found at N154 and N212.

Belongs to the peptidase C56 family. As to quaternary structure, homotetramer. Component of the FERRY complex.

It localises to the secreted. Its subcellular location is the early endosome. Functionally, component of the FERRY complex (Five-subunit Endosomal Rab5 and RNA/ribosome intermediary). The FERRY complex directly interacts with mRNAs and RAB5A, and functions as a RAB5A effector involved in the localization and the distribution of specific mRNAs most likely by mediating their endosomal transport. The complex recruits mRNAs and ribosomes to early endosomes through direct mRNA-interaction. The protein is Glutamine amidotransferase-like class 1 domain-containing protein 1 of Xenopus laevis (African clawed frog).